A 486-amino-acid polypeptide reads, in one-letter code: uncharacterized protein (486 aa).

A helical membrane pass occupies residues 7 to 28 (HVISIFETVGAYFINIFYNFLY). Residues N73, N83, and N195 are each glycosylated (N-linked (GlcNAc...) asparagine; by host). Residues 183 to 233 (ELEETYARLSSYNRSLLYQIEELTSEKKSFLEELSTLRKKYEKRQSEYRRL) adopt a coiled-coil conformation. Residues 299 to 329 (SQEVTSKSPNNYPVPQSRTIVNKPSDNYPVP) are disordered. Over residues 300–323 (QEVTSKSPNNYPVPQSRTIVNKPS) the composition is skewed to polar residues. A glycan (N-linked (GlcNAc...) asparagine; by host) is linked at N461.

This sequence belongs to the asfivirus B475L family.

The protein localises to the host membrane. This is an uncharacterized protein from Ornithodoros (relapsing fever ticks).